We begin with the raw amino-acid sequence, 308 residues long: Ribosomal RNA small subunit methyltransferase H (308 aa).

S-adenosyl-L-methionine-binding positions include 32–34 (AGH), D52, F79, D100, and Q107.

Belongs to the methyltransferase superfamily. RsmH family.

It localises to the cytoplasm. It catalyses the reaction cytidine(1402) in 16S rRNA + S-adenosyl-L-methionine = N(4)-methylcytidine(1402) in 16S rRNA + S-adenosyl-L-homocysteine + H(+). In terms of biological role, specifically methylates the N4 position of cytidine in position 1402 (C1402) of 16S rRNA. The chain is Ribosomal RNA small subunit methyltransferase H from Mycoplasma mycoides subsp. mycoides SC (strain CCUG 32753 / NCTC 10114 / PG1).